Reading from the N-terminus, the 129-residue chain is Mini-ribonuclease 3-like protein (129 aa).

Asp-23 is an active-site residue.

It belongs to the MrnC RNase family.

Its function is as follows. Might be a ribonuclease involved in RNA processing. This is Mini-ribonuclease 3-like protein (mrnCL) from Fusobacterium nucleatum subsp. nucleatum (strain ATCC 25586 / DSM 15643 / BCRC 10681 / CIP 101130 / JCM 8532 / KCTC 2640 / LMG 13131 / VPI 4355).